The primary structure comprises 309 residues: MKKLGTLLVLFLSVIALVACASGKKDATSGQKLKVVATNSIIADITKNIAGDKIDLHSIVPVGQDPHEYEPLPEDVKKTSQADLIFYNGINLETGGNAWFTKLVENAKKTENKDYFAVSEGVDVIYLEGQNEKGKEDPHAWLNLENGMIYAKNIAKQLIAKDPSNKEFYEKNLKDYTEKLDKLDKEAKEKFNNIPAEKKLIVTSEGCFKYFSKAYGVPSAYIWEINTEEEGTPEQIKTLVEKLRQTKVPSLFVESSVDDRPMKTVSQDTNIPIYAQIFTDSIAEEGKEGDSYYSMMKYNLDKIAEGLSK.

The signal sequence occupies residues 1–19; it reads MKKLGTLLVLFLSVIALVA. C20 carries N-palmitoyl cysteine lipidation. The S-diacylglycerol cysteine moiety is linked to residue C20. H67, H139, E205, and D280 together coordinate Mn(2+).

Belongs to the bacterial solute-binding protein 9 family. Lipoprotein receptor antigen (Lrai) subfamily.

Its subcellular location is the cell membrane. Part of the ATP-binding cassette (ABC) transport system PsaABC involved in manganese import. Binds manganese with high affinity and specificity and delivers it to the membrane permease for translocation into the cytoplasm. Also acts as an adhesin which is involved on adherence to extracellular matrix. This chain is Manganese ABC transporter substrate-binding lipoprotein PsaA (psaA), found in Streptococcus anginosus.